The sequence spans 220 residues: UPF0319 protein CKO_02102 (220 aa).

Positions 1-20 (MKTGIITMLFVLYLPVTAFA) are cleaved as a signal peptide.

This sequence belongs to the UPF0319 family.

This chain is UPF0319 protein CKO_02102, found in Citrobacter koseri (strain ATCC BAA-895 / CDC 4225-83 / SGSC4696).